Reading from the N-terminus, the 42-residue chain is Photosystem I reaction center subunit IX (42 aa).

A helical membrane pass occupies residues 7–27 (YLSVAPVLSTLWFGILAGLLI).

It belongs to the PsaJ family.

It is found in the plastid. It localises to the chloroplast thylakoid membrane. Its function is as follows. May help in the organization of the PsaE and PsaF subunits. In Lemna minor (Common duckweed), this protein is Photosystem I reaction center subunit IX.